Reading from the N-terminus, the 235-residue chain is tRNA (cytidine-2'-O-)-methyltransferase TrmJ (235 aa).

S-adenosyl-L-methionine is bound by residues 77–79 (TSS), Gly111, Ile131, and 138–140 (PVL).

This sequence belongs to the class IV-like SAM-binding methyltransferase superfamily. RNA methyltransferase TrmH family. Homodimer.

It is found in the cytoplasm. It catalyses the reaction cytidine(32) in tRNA + S-adenosyl-L-methionine = 2'-O-methylcytidine(32) in tRNA + S-adenosyl-L-homocysteine + H(+). Catalyzes the formation of 2'O-methylated cytidine (Cm32) at position 32 in tRNA. Is specific for cytidine. The polypeptide is tRNA (cytidine-2'-O-)-methyltransferase TrmJ (Sulfolobus acidocaldarius (strain ATCC 33909 / DSM 639 / JCM 8929 / NBRC 15157 / NCIMB 11770)).